Consider the following 553-residue polypeptide: Putative transport protein PM1071 (553 aa).

Transmembrane regions (helical) follow at residues 4-24 (IAIT…IGHW), 28-48 (GVGL…HFTN), 65-85 (FGLI…FFAS), 91-111 (LKLN…VIVI), and 157-177 (MAYA…MWLI). RCK C-terminal domains lie at 190–276 (KNFL…VLGE) and 277–361 (EVDV…ILGN). 6 helical membrane passes run 371-391 (MLPV…PFHI), 403-425 (AGGP…LYWF), 439-459 (IVLF…DTLV), 464-484 (LEWM…VGIV), 496-516 (LCGL…ANAI), and 533-553 (LVMF…WTLL).

It belongs to the AAE transporter (TC 2.A.81) family. YidE subfamily.

It is found in the cell membrane. This Pasteurella multocida (strain Pm70) protein is Putative transport protein PM1071.